Here is a 146-residue protein sequence, read N- to C-terminus: Microsomal glutathione S-transferase 2 (146 aa).

3 helical membrane-spanning segments follow: residues 6–26 (ILLAALSVLSACQQSYFAMQV), 59–79 (FYPIFIITLWMAGWYFNQVFA), and 111–131 (SLGVLALLTVLGAVGILNSFL).

This sequence belongs to the MAPEG family. As to quaternary structure, homotrimer.

The protein resides in the endoplasmic reticulum membrane. Its subcellular location is the microsome membrane. The catalysed reaction is RX + glutathione = an S-substituted glutathione + a halide anion + H(+). It catalyses the reaction 1-chloro-2,4-dinitrobenzene + glutathione = 2,4-dinitrophenyl-S-glutathione + chloride + H(+). It carries out the reaction leukotriene C4 = leukotriene A4 + glutathione. The enzyme catalyses (5S)-hydroperoxy-(6E,8Z,11Z,14Z)-eicosatetraenoate + 2 glutathione = (5S)-hydroxy-(6E,8Z,11Z,14Z)-eicosatetraenoate + glutathione disulfide + H2O. With respect to regulation, each monomer binds on GSH molecule but only one subunit is catalytically active. In terms of biological role, catalyzes several different glutathione-dependent reactions. Catalyzes the glutathione-dependent reduction of lipid hydroperoxides, such as 5-HPETE. Has glutathione transferase activity, toward xenobiotic electrophiles, such as 1-chloro-2, 4-dinitrobenzene (CDNB). Also catalyzes the conjugation of leukotriene A4 with reduced glutathione to form leukotriene C4 (LTC4). Involved in oxidative DNA damage induced by ER stress and anticancer agents by activating LTC4 biosynthetic machinery in nonimmune cells. This is Microsomal glutathione S-transferase 2 (MGST2) from Bos taurus (Bovine).